Here is a 230-residue protein sequence, read N- to C-terminus: NAD(P)H-hydrate epimerase (230 aa).

Residues 11-218 (AIAVDQELFN…ALQRKYELNL (208 aa)) enclose the YjeF N-terminal domain. 61–65 (NNGGD) lines the (6S)-NADPHX pocket. Residues Asn62 and Asp126 each contribute to the K(+) site. Residues 130 to 136 (GFSFKPP) and Asp159 contribute to the (6S)-NADPHX site. Ser162 serves as a coordination point for K(+).

Belongs to the NnrE/AIBP family. K(+) serves as cofactor.

It carries out the reaction (6R)-NADHX = (6S)-NADHX. The enzyme catalyses (6R)-NADPHX = (6S)-NADPHX. Catalyzes the epimerization of the S- and R-forms of NAD(P)HX, a damaged form of NAD(P)H that is a result of enzymatic or heat-dependent hydration. This is a prerequisite for the S-specific NAD(P)H-hydrate dehydratase to allow the repair of both epimers of NAD(P)HX. The sequence is that of NAD(P)H-hydrate epimerase from Drosophila melanogaster (Fruit fly).